The primary structure comprises 128 residues: Protein Wnt-2b-B (128 aa).

Disulfide bonds link cysteine 3–cysteine 16 and cysteine 5–cysteine 11. A lipid anchor (O-palmitoleoyl serine; by PORCN) is attached at serine 8. N-linked (GlcNAc...) asparagine glycosylation is present at asparagine 48. 2 cysteine pairs are disulfide-bonded: cysteine 90–cysteine 105 and cysteine 127–cysteine 128.

This sequence belongs to the Wnt family. Palmitoleoylation is required for efficient binding to frizzled receptors. Depalmitoleoylation leads to Wnt signaling pathway inhibition.

It is found in the secreted. The protein resides in the extracellular space. It localises to the extracellular matrix. Ligand for members of the frizzled family of seven transmembrane receptors. Functions in the canonical Wnt/beta-catenin signaling pathway. The chain is Protein Wnt-2b-B (wnt2b-b) from Xenopus laevis (African clawed frog).